The sequence spans 365 residues: Succinyl-diaminopimelate desuccinylase (365 aa).

His-65 is a binding site for Zn(2+). Asp-67 is a catalytic residue. Asp-96 provides a ligand contact to Zn(2+). Glu-126 functions as the Proton acceptor in the catalytic mechanism. Glu-127, Glu-155, and His-340 together coordinate Zn(2+).

Belongs to the peptidase M20A family. DapE subfamily. In terms of assembly, homodimer. The cofactor is Zn(2+). It depends on Co(2+) as a cofactor.

The catalysed reaction is N-succinyl-(2S,6S)-2,6-diaminopimelate + H2O = (2S,6S)-2,6-diaminopimelate + succinate. It functions in the pathway amino-acid biosynthesis; L-lysine biosynthesis via DAP pathway; LL-2,6-diaminopimelate from (S)-tetrahydrodipicolinate (succinylase route): step 3/3. Functionally, catalyzes the hydrolysis of N-succinyl-L,L-diaminopimelic acid (SDAP), forming succinate and LL-2,6-diaminopimelate (DAP), an intermediate involved in the bacterial biosynthesis of lysine and meso-diaminopimelic acid, an essential component of bacterial cell walls. The chain is Succinyl-diaminopimelate desuccinylase from Campylobacter jejuni subsp. jejuni serotype O:23/36 (strain 81-176).